The chain runs to 107 residues: Ferredoxin-6 (107 aa).

The 105-residue stretch at 2–106 (AKIIFIEHNG…GLVVHLPEKQ (105 aa)) folds into the 2Fe-2S ferredoxin-type domain. The [2Fe-2S] cluster site is built by C40, C46, C49, and C87.

The protein belongs to the adrenodoxin/putidaredoxin family. [2Fe-2S] cluster is required as a cofactor.

Ferredoxins are small electron carrier proteins that participate in various redox reactions. FdVI is an essential protein required for growth of R.capsulatus. May be involved in Fe-S cluster assembly. The chain is Ferredoxin-6 from Rhodobacter capsulatus (Rhodopseudomonas capsulata).